A 597-amino-acid chain; its full sequence is Medium/long-chain-fatty-acid--CoA ligase FadD6 (597 aa).

This sequence belongs to the ATP-dependent AMP-binding enzyme family.

The catalysed reaction is a medium-chain fatty acid + ATP + CoA = a medium-chain fatty acyl-CoA + AMP + diphosphate. The enzyme catalyses a long-chain fatty acid + ATP + CoA = a long-chain fatty acyl-CoA + AMP + diphosphate. It carries out the reaction hexanoate + ATP + CoA = hexanoyl-CoA + AMP + diphosphate. It catalyses the reaction octanoate + ATP + CoA = octanoyl-CoA + AMP + diphosphate. The catalysed reaction is decanoate + ATP + CoA = decanoyl-CoA + AMP + diphosphate. The enzyme catalyses dodecanoate + ATP + CoA = dodecanoyl-CoA + AMP + diphosphate. It carries out the reaction tetradecanoate + ATP + CoA = tetradecanoyl-CoA + AMP + diphosphate. It catalyses the reaction hexadecanoate + ATP + CoA = hexadecanoyl-CoA + AMP + diphosphate. The catalysed reaction is octadecanoate + ATP + CoA = octadecanoyl-CoA + AMP + diphosphate. The enzyme catalyses 9-decenoate + ATP + CoA = 9-decenoyl-CoA + AMP + diphosphate. It carries out the reaction (9Z)-octadecenoate + ATP + CoA = (9Z)-octadecenoyl-CoA + AMP + diphosphate. It catalyses the reaction 2-hydroxyhexadecanoate + ATP + CoA = 2-hydroxyhexadecanoyl-CoA + AMP + diphosphate. The catalysed reaction is 3-hydroxytetradecanoate + ATP + CoA = 3-hydroxytetradecanoyl-CoA + AMP + diphosphate. The enzyme catalyses 12-hydroxyoctadecanoate + ATP + CoA = 12-hydroxyoctadecanoyl-CoA + AMP + diphosphate. It carries out the reaction 15-hydroxypentadecanoate + ATP + CoA = 15-hydroxypentadecanoyl-CoA + AMP + diphosphate. It catalyses the reaction 16-hydroxyhexadecanoate + ATP + CoA = 16-hydroxyhexadecanoyl-CoA + AMP + diphosphate. The catalysed reaction is 2-methylhexadecanoate + ATP + CoA = 2-methylhexadecanoyl-CoA + AMP + diphosphate. The enzyme catalyses 3-methylundecanoate + ATP + CoA = 3-methylundecanoyl-CoA + AMP + diphosphate. It carries out the reaction 12-methyltridecanoate + ATP + CoA = 12-methyltridecanoyl-CoA + AMP + diphosphate. It catalyses the reaction 12-methyloctadecanoate + ATP + CoA = 12-methyloctadecanoyl-CoA + AMP + diphosphate. Catalyzes the activation of medium/long-chain fatty acids as acyl-coenzyme A (acyl-CoA). May play a role in the uptake of fatty acids by trapping them metabolically as CoA esters. May also play an important role in the channeling of fatty acids into triacylglycerol (TAG) for use by Mycobacterium during its dormancy. The chain is Medium/long-chain-fatty-acid--CoA ligase FadD6 from Mycobacterium tuberculosis (strain ATCC 25618 / H37Rv).